A 183-amino-acid polypeptide reads, in one-letter code: Threonylcarbamoyl-AMP synthase (183 aa).

One can recognise a YrdC-like domain in the interval 1–183 (MNIQQIVEQL…LFTHQLFRQG (183 aa)).

It belongs to the SUA5 family. TsaC subfamily.

Its subcellular location is the cytoplasm. It catalyses the reaction L-threonine + hydrogencarbonate + ATP = L-threonylcarbamoyladenylate + diphosphate + H2O. Required for the formation of a threonylcarbamoyl group on adenosine at position 37 (t(6)A37) in tRNAs that read codons beginning with adenine. Catalyzes the conversion of L-threonine, HCO(3)(-)/CO(2) and ATP to give threonylcarbamoyl-AMP (TC-AMP) as the acyladenylate intermediate, with the release of diphosphate. In Pasteurella multocida (strain Pm70), this protein is Threonylcarbamoyl-AMP synthase.